A 384-amino-acid chain; its full sequence is Glutamate 5-kinase (384 aa).

Lys-24 contacts ATP. The substrate site is built by Ser-64, Asp-149, and Asn-161. ATP contacts are provided by residues 181–182 and 223–229; these read TD and TGGMRTK. One can recognise a PUA domain in the interval 288 to 370; sequence PGAILIDAGA…RDIQTLLGYT (83 aa).

It belongs to the glutamate 5-kinase family.

It is found in the cytoplasm. The catalysed reaction is L-glutamate + ATP = L-glutamyl 5-phosphate + ADP. The protein operates within amino-acid biosynthesis; L-proline biosynthesis; L-glutamate 5-semialdehyde from L-glutamate: step 1/2. Its function is as follows. Catalyzes the transfer of a phosphate group to glutamate to form L-glutamate 5-phosphate. The protein is Glutamate 5-kinase of Xylella fastidiosa (strain M23).